The following is a 122-amino-acid chain: LYR motif-containing protein 1 (122 aa).

This sequence belongs to the complex I LYR family. As to expression, high levels in adipose tissue.

It localises to the nucleus. In terms of biological role, may promote cell proliferation and inhibition of apoptosis of preadipocytes. The sequence is that of LYR motif-containing protein 1 (LYRM1) from Homo sapiens (Human).